A 90-amino-acid chain; its full sequence is Acylphosphatase (90 aa).

The Acylphosphatase-like domain occupies 3–90; it reads RVLIKLTGKV…DIYLDFSIVR (88 aa). Active-site residues include R18 and N36.

The protein belongs to the acylphosphatase family.

The catalysed reaction is an acyl phosphate + H2O = a carboxylate + phosphate + H(+). The sequence is that of Acylphosphatase (acyP) from Shewanella oneidensis (strain ATCC 700550 / JCM 31522 / CIP 106686 / LMG 19005 / NCIMB 14063 / MR-1).